The sequence spans 180 residues: Probable DNA-directed RNA polymerase subunit delta (180 aa).

Residues 14–81 (LSMIEVARAI…GHNVWALRSW (68 aa)) form the HTH HARE-type domain. Positions 89 to 180 (EEVNHPEDEE…HQDDLDDDDE (92 aa)) are disordered. Over residues 115–163 (DSDDDDIIDYDSDDPEDEDLDVDEEDTNEDDYSDDDLDDADDNELDDGI) the composition is skewed to acidic residues.

It belongs to the RpoE family. As to quaternary structure, RNAP is composed of a core of 2 alpha, a beta and a beta' subunits. The core is associated with a delta subunit and one of several sigma factors.

In terms of biological role, participates in both the initiation and recycling phases of transcription. In the presence of the delta subunit, RNAP displays an increased specificity of transcription, a decreased affinity for nucleic acids, and an increased efficiency of RNA synthesis because of enhanced recycling. This chain is Probable DNA-directed RNA polymerase subunit delta, found in Lactobacillus johnsonii (strain CNCM I-12250 / La1 / NCC 533).